The primary structure comprises 365 residues: S-adenosylmethionine:tRNA ribosyltransferase-isomerase (365 aa).

It belongs to the QueA family. As to quaternary structure, monomer.

Its subcellular location is the cytoplasm. The enzyme catalyses 7-aminomethyl-7-carbaguanosine(34) in tRNA + S-adenosyl-L-methionine = epoxyqueuosine(34) in tRNA + adenine + L-methionine + 2 H(+). The protein operates within tRNA modification; tRNA-queuosine biosynthesis. Transfers and isomerizes the ribose moiety from AdoMet to the 7-aminomethyl group of 7-deazaguanine (preQ1-tRNA) to give epoxyqueuosine (oQ-tRNA). The sequence is that of S-adenosylmethionine:tRNA ribosyltransferase-isomerase from Rickettsia conorii (strain ATCC VR-613 / Malish 7).